The sequence spans 685 residues: Dammaradiene synthase (685 aa).

PFTB repeat units follow at residues Met82–Asn123 and Ile265–Val308. The Proton donor role is filled by Asp400. 2 PFTB repeats span residues Ile424 to Val465 and Ile621 to Arg672.

The protein belongs to the terpene cyclase/mutase family.

It carries out the reaction squalene = dammara-20,24-diene. In terms of biological role, squalene cyclase producing the tetracyclic triterpene dammaradiene. The sequence is that of Dammaradiene synthase (DCD) from Dryopteris crassirhizoma (Thick stemmed wood fern).